A 1825-amino-acid polypeptide reads, in one-letter code: Serine protease/ABC transporter B family protein tagD (1825 aa).

A signal peptide spans 1–26 (MKSNTNIRVLLVSGLILIFIFLGIKF). One can recognise a Peptidase S8 domain in the interval 307–727 (PKAIFGTKDT…NAVFDTFAGA (421 aa)). Catalysis depends on charge relay system residues Asp-338 and His-384. The N-linked (GlcNAc...) asparagine glycan is linked to Asn-629. Ser-652 (charge relay system) is an active-site residue. N-linked (GlcNAc...) asparagine glycosylation is found at Asn-704, Asn-781, Asn-849, and Asn-896. Residues 971-991 (YIVIIVAGGTMSLIITVLILI) form a helical membrane-spanning segment. Residue Asn-1018 is glycosylated (N-linked (GlcNAc...) asparagine). 4 helical membrane passes run 1071–1091 (FIIE…ASIL), 1116–1136 (FIII…SSWI), 1189–1209 (GILL…VFIF), and 1210–1230 (TISW…AIVT). In terms of domain architecture, ABC transmembrane type-1 spans 1075–1358 (ITISTACSLV…LFGVYSSYVQ (284 aa)). Residue Asn-1295 is glycosylated (N-linked (GlcNAc...) asparagine). Transmembrane regions (helical) follow at residues 1304–1324 (WLMV…LAIQ) and 1327–1347 (FTVG…DSST). Positions 1386–1529 (DNIIDTNQDN…NDDPNDNNGI (144 aa)) are disordered. Residues 1388 to 1402 (IIDTNQDNNNNNNND) show a composition bias toward low complexity. Residues 1403–1415 (DISDSSSDDDDDN) show a composition bias toward acidic residues. An N-linked (GlcNAc...) asparagine glycan is attached at Asn-1424. Residues 1465–1494 (GEGIDNNNNNNNDNNINDDNNQQDPNNNNN) are compositionally biased toward low complexity. The segment covering 1495 to 1514 (EIDDDGDDDGDDDDEGEDEN) has biased composition (acidic residues). Residues 1515-1529 (NNNNNNDDPNDNNGI) show a composition bias toward low complexity. The 238-residue stretch at 1576 to 1813 (IEFKNVSFCY…KGKYYRMFAF (238 aa)) folds into the ABC transporter domain. N-linked (GlcNAc...) asparagine glycosylation is present at Asn-1580. Position 1611–1618 (1611–1618 (GPSGSGKS)) interacts with ATP. Residues Asn-1715 and Asn-1755 are each glycosylated (N-linked (GlcNAc...) asparagine).

The protein in the C-terminal section; belongs to the ABC transporter superfamily. ABCB family. Multidrug resistance exporter (TC 3.A.1.201) subfamily. This sequence in the N-terminal section; belongs to the peptidase S8 family.

The protein resides in the membrane. In Dictyostelium discoideum (Social amoeba), this protein is Serine protease/ABC transporter B family protein tagD (tagD).